The chain runs to 385 residues: Spindle pole component BBP1 (385 aa).

A Phosphoserine modification is found at Ser29. Residues 34–48 (YKDQEERRDRSRYAQ) show a composition bias toward basic and acidic residues. The segment at 34 to 76 (YKDQEERRDRSRYAQDDTNFSMKFGNDSNRRSTNLSRSNSWSG) is disordered. Residues 64–75 (RSTNLSRSNSWS) are compositionally biased toward low complexity. Ser73 and Ser115 each carry phosphoserine. The stretch at 229–355 (QMDLNSRDLE…KDMQRDNYES (127 aa)) forms a coiled coil.

This sequence belongs to the BBP1 family. Homodimer. Interacts with KAR1, MPS2 and SPC29.

The protein resides in the cytoplasm. Its subcellular location is the cytoskeleton. The protein localises to the microtubule organizing center. It localises to the spindle pole body. Functionally, component of the spindle pole body (SPB) required for insertion of the nascent SPB into the nuclear envelope and for the proper execution of spindle pole body (SPB) duplication. Connects the central plaque of the SPB with the half-bridge. Required for proper localization of CDC5 at the SPB and for proper M-phase progression. The chain is Spindle pole component BBP1 (BBP1) from Saccharomyces cerevisiae (strain ATCC 204508 / S288c) (Baker's yeast).